Here is a 124-residue protein sequence, read N- to C-terminus: Fluoride-specific ion channel FluC (124 aa).

The next 4 helical transmembrane spans lie at 4–24 (IVLLGLAGALGSLARYGLAGL), 35–55 (LGTFIVNVLGCLAFGFVWGVC), 67–87 (VVLLTGFMGAFTTFSTFTFES), and 96–116 (WLAFALYAGGQLLLGLALLWL). 2 residues coordinate Na(+): G75 and T78.

The protein belongs to the fluoride channel Fluc/FEX (TC 1.A.43) family.

It localises to the cell inner membrane. It carries out the reaction fluoride(in) = fluoride(out). Its activity is regulated as follows. Na(+) is not transported, but it plays an essential structural role and its presence is essential for fluoride channel function. Its function is as follows. Fluoride-specific ion channel. Important for reducing fluoride concentration in the cell, thus reducing its toxicity. The protein is Fluoride-specific ion channel FluC of Nitratidesulfovibrio vulgaris (strain DSM 19637 / Miyazaki F) (Desulfovibrio vulgaris).